The following is a 372-amino-acid chain: Aminomethyltransferase (372 aa).

Belongs to the GcvT family. As to quaternary structure, the glycine cleavage system is composed of four proteins: P, T, L and H.

It carries out the reaction N(6)-[(R)-S(8)-aminomethyldihydrolipoyl]-L-lysyl-[protein] + (6S)-5,6,7,8-tetrahydrofolate = N(6)-[(R)-dihydrolipoyl]-L-lysyl-[protein] + (6R)-5,10-methylene-5,6,7,8-tetrahydrofolate + NH4(+). In terms of biological role, the glycine cleavage system catalyzes the degradation of glycine. This is Aminomethyltransferase from Burkholderia multivorans (strain ATCC 17616 / 249).